The following is a 474-amino-acid chain: Protein Rv3254 (474 aa).

Positions 1-4 are excised as a propeptide; it reads MTGR.

In Mycobacterium tuberculosis (strain ATCC 25618 / H37Rv), this protein is Protein Rv3254.